The chain runs to 437 residues: Adenylosuccinate synthetase (437 aa).

Residues Gly-12 to Lys-18 and Gly-40 to Thr-42 each bind GTP. Residue Asp-13 is the Proton acceptor of the active site. Mg(2+)-binding residues include Asp-13 and Gly-40. Residues Asp-13 to Lys-16, Asn-38 to His-41, Thr-128, Arg-142, Gln-223, Thr-238, and Arg-302 each bind IMP. The active-site Proton donor is His-41. Residue Thr-298–Arg-304 participates in substrate binding. Residues Arg-304, Lys-330–Asp-332, and Ser-412–Gly-414 contribute to the GTP site.

The protein belongs to the adenylosuccinate synthetase family. Homodimer. Requires Mg(2+) as cofactor.

It localises to the cytoplasm. The catalysed reaction is IMP + L-aspartate + GTP = N(6)-(1,2-dicarboxyethyl)-AMP + GDP + phosphate + 2 H(+). Its pathway is purine metabolism; AMP biosynthesis via de novo pathway; AMP from IMP: step 1/2. Plays an important role in the de novo pathway of purine nucleotide biosynthesis. Catalyzes the first committed step in the biosynthesis of AMP from IMP. This is Adenylosuccinate synthetase from Parasynechococcus marenigrum (strain WH8102).